We begin with the raw amino-acid sequence, 473 residues long: MNIKKFAKQATVLTFTTALLAGGATQAFAKETNQKPYKETYGISHITRHDMLQIPEQQKNEKYQVPEFDSSTIKNISSAKGLDVWDSWPLQNADGTVANYHGYHIVFALAGDPKNADDTSIYMFYQKVGETSIDSWKTPGRVFKDSDKFDANDSILKDQTQEWSGSATFTSDGKIRLFYTDFSGKHYGKQTLTTAQVNVSASDSSLNINGVEDYKSIFDGDSKTYQNVQQFIDEGNYSSGDNHTLRDPHYVEDKGHKYLVFEANTGTEDGYQGEESLFNKAYYGKSTSFFRQESQKLLQSDKNRTAELANGALGMIELNDDYTLKKVMKPLIASNTVTDEIERANVFKMNGKWYLSTDSRGSQMTIDGITSNDIYMLGYVSNSLTGPYKPLNKTGLVLKMDLDPNDVTFTYSHFAVPQATGNNVVITSYMTNRGFYADKQSTFAPSFLLNIQGKKTSVVKASILDQGQLTVNQ.

A signal peptide spans M1–A29.

It belongs to the glycosyl hydrolase 68 family.

Its subcellular location is the secreted. This chain is Inactive levansucrase (sacB), found in Geobacillus stearothermophilus (Bacillus stearothermophilus).